The chain runs to 225 residues: Lectin (225 aa).

In terms of assembly, homotetramer.

Functionally, chitin-binding lectin. Agglutinates rabbit erythrocytes, but not human erythrocytes. In Vachellia farnesiana (Sweet acacia), this protein is Lectin.